A 289-amino-acid polypeptide reads, in one-letter code: MPANAAAPLYAKERYEFNKLQKRLRRLTGQAIADYGMIQEGDRVMVCLSGGKDSFTLLDILLKLRINAPVNFDLVAVNLDQKQPGFPADVLPNYLSEQGIPFHIIEQDTYSVVKSIIPEGKTTCGLCSRLRRGLLYRYAADHGITKIALGHHRDDILETFFLNLFYGGTLKAMPPKLLSDDRRHIVIRPLAYCKEEDIARYARIRAFPIIPCNLCGSQENLQRQAMKAMLKDWEKRHPGRVETVFTALQNVAPSQLADSRLFDFAALDSLRNTAETTPEHGAGLDILSR.

A PP-loop motif motif is present at residues 49–54 (SGGKDS). The [4Fe-4S] cluster site is built by Cys-124, Cys-127, and Cys-215.

The protein belongs to the TtcA family. In terms of assembly, homodimer. Requires Mg(2+) as cofactor. It depends on [4Fe-4S] cluster as a cofactor.

The protein localises to the cytoplasm. It carries out the reaction cytidine(32) in tRNA + S-sulfanyl-L-cysteinyl-[cysteine desulfurase] + AH2 + ATP = 2-thiocytidine(32) in tRNA + L-cysteinyl-[cysteine desulfurase] + A + AMP + diphosphate + H(+). The protein operates within tRNA modification. In terms of biological role, catalyzes the ATP-dependent 2-thiolation of cytidine in position 32 of tRNA, to form 2-thiocytidine (s(2)C32). The sulfur atoms are provided by the cysteine/cysteine desulfurase (IscS) system. The chain is tRNA-cytidine(32) 2-sulfurtransferase from Methylococcus capsulatus (strain ATCC 33009 / NCIMB 11132 / Bath).